Here is a 656-residue protein sequence, read N- to C-terminus: Histidine decarboxylase (656 aa).

Y84 and H197 together coordinate substrate. K308 is subject to N6-(pyridoxal phosphate)lysine. 2 positions are modified to phosphoserine; by PKA: S343 and S362. Residues 481–502 are disordered; the sequence is HCTSQPSPRAKNLIPPPVTRDS.

Belongs to the group II decarboxylase family. Homodimer. Pyridoxal 5'-phosphate serves as cofactor. In terms of processing, may be post-translationally processed. As to expression, brain, glandular regions of the stomach, mast cells and fetal liver.

It carries out the reaction L-histidine + H(+) = histamine + CO2. It participates in amine and polyamine biosynthesis; histamine biosynthesis; histamine from L-histidine: step 1/1. Phosphorylation of brain HDC by cAMP-dependent protein kinase leads to enzyme inactivation. In terms of biological role, catalyzes the biosynthesis of histamine from histidine. This chain is Histidine decarboxylase (Hdc), found in Rattus norvegicus (Rat).